The chain runs to 367 residues: Germination protease (367 aa).

Residues Met1 to Asp15 constitute a propeptide that is removed on maturation.

Belongs to the peptidase A25 family. Homotetramer. Autoproteolytically processed. The inactive tetrameric zymogen termed p46 autoprocesses to a smaller form termed p41, which is active only during spore germination.

It carries out the reaction Endopeptidase action with P4 Glu or Asp, P1 preferably Glu &gt; Asp, P1' hydrophobic and P2' Ala.. Its function is as follows. Initiates the rapid degradation of small, acid-soluble proteins during spore germination. The protein is Germination protease of Bacillus cereus (strain ATCC 10987 / NRS 248).